The sequence spans 340 residues: Cysteinyl leukotriene receptor 1 (340 aa).

Topologically, residues 1–31 (MDETGNPTIPPASNNTCYDSIDDFRNQVYST) are extracellular. Residue Asn14 is glycosylated (N-linked (GlcNAc...) asparagine). The helical transmembrane segment at 32-52 (LYSMISVVGFFGNGFVLYVLV) threads the bilayer. The Cytoplasmic segment spans residues 53–60 (KTYHEKSA). A helical membrane pass occupies residues 61–81 (FQVYMINLAVADLLCVCTLPL). The Extracellular segment spans residues 82 to 109 (RVAYYVHKGIWLFGDFLCRLSTYALYVN). Residues Cys99 and Cys176 are joined by a disulfide bond. The chain crosses the membrane as a helical span at residues 110-130 (LYCSIFFMTAMSFFRCVAIVF). Topologically, residues 131–144 (PVQNISLVTQKKAR) are cytoplasmic. Residues 145-165 (LVCIAIWMFVILTSSPFLMAN) form a helical membrane-spanning segment. Residues 166–196 (TYKDEKNNTKCFEPPQDNQAKNYVLILHYVS) are Extracellular-facing. The N-linked (GlcNAc...) asparagine glycan is linked to Asn172. Residues 197 to 217 (LFIGFIIPFITIIVCYTMIIF) form a helical membrane-spanning segment. Topologically, residues 218–233 (TLLKSSMKKNLSSRKR) are cytoplasmic. A helical transmembrane segment spans residues 234 to 254 (AIGMIIVVTAAFLVSFMPYHI). The Extracellular segment spans residues 255–279 (QRTIHLHFLHNKTKPCDSILRMQKS). N-linked (GlcNAc...) asparagine glycosylation occurs at Asn265. A helical membrane pass occupies residues 280–300 (VVITLSLAASNCCFDPLLYFF). The Cytoplasmic segment spans residues 301–340 (SGGNFRRRLSTIRKYSLSSMTYIPKKKTSLPQKGKDICKE).

It belongs to the G-protein coupled receptor 1 family.

The protein localises to the cell membrane. Its function is as follows. Receptor for cysteinyl leukotrienes mediating bronchoconstriction of individuals with and without asthma. Stimulation by LTD4 results in the contraction and proliferation of smooth muscle, edema, eosinophil migration and damage to the mucus layer in the lung. This response is mediated via a G-protein that activates a phosphatidylinositol-calcium second messenger system. The chain is Cysteinyl leukotriene receptor 1 (CYSLTR1) from Cavia porcellus (Guinea pig).